Consider the following 53-residue polypeptide: Large ribosomal subunit protein eL40 (53 aa).

Belongs to the eukaryotic ribosomal protein eL40 family.

In Pyrobaculum neutrophilum (strain DSM 2338 / JCM 9278 / NBRC 100436 / V24Sta) (Thermoproteus neutrophilus), this protein is Large ribosomal subunit protein eL40.